A 271-amino-acid chain; its full sequence is Tryptophan synthase alpha chain (271 aa).

Residues Glu-49 and Asp-60 each act as proton acceptor in the active site.

It belongs to the TrpA family. In terms of assembly, tetramer of two alpha and two beta chains.

It catalyses the reaction (1S,2R)-1-C-(indol-3-yl)glycerol 3-phosphate + L-serine = D-glyceraldehyde 3-phosphate + L-tryptophan + H2O. The protein operates within amino-acid biosynthesis; L-tryptophan biosynthesis; L-tryptophan from chorismate: step 5/5. Functionally, the alpha subunit is responsible for the aldol cleavage of indoleglycerol phosphate to indole and glyceraldehyde 3-phosphate. In Burkholderia ambifaria (strain MC40-6), this protein is Tryptophan synthase alpha chain.